The chain runs to 373 residues: DNA primase small subunit PriS (373 aa).

Residues aspartate 95, aspartate 97, and aspartate 281 contribute to the active site.

Belongs to the eukaryotic-type primase small subunit family. In terms of assembly, heterodimer of a small subunit (PriS) and a large subunit (PriL). Requires Mg(2+) as cofactor. Mn(2+) serves as cofactor.

Catalytic subunit of DNA primase, an RNA polymerase that catalyzes the synthesis of short RNA molecules used as primers for DNA polymerase during DNA replication. The small subunit contains the primase catalytic core and has DNA synthesis activity on its own. Binding to the large subunit stabilizes and modulates the activity, increasing the rate of DNA synthesis while decreasing the length of the DNA fragments, and conferring RNA synthesis capability. The DNA polymerase activity may enable DNA primase to also catalyze primer extension after primer synthesis. May also play a role in DNA repair. The sequence is that of DNA primase small subunit PriS from Nitrosopumilus maritimus (strain SCM1).